We begin with the raw amino-acid sequence, 334 residues long: WD repeat-containing protein 54 (334 aa).

WD repeat units lie at residues 116 to 155 (SSVQ…PNIV), 162 to 206 (GHQT…TLLT), and 250 to 289 (AHAR…ESGS).

Homodimer and homotrimer; forms tight forms of dimers and trimers. Interacts with IZUMO1 and IZUMO1R/JUNO. Post-translationally, cross-linked to tightly form both dimers and trimers by TGM2. Cross-linking enhances the activation of EGF receptor-mediated signaling pathway. Cross-linking is inhibited by EGF. Ubiquitinated. EGF increases ubiquitination.

Its subcellular location is the vesicle. The protein resides in the cytoplasm. The protein localises to the cell membrane. Plays a role in the adhesion and fusion of the sperm-oocyte membrane through its interactions with IZUMO1 and IZUMO1R/JUNO. When cross-linked to form dimers and trimers, it has a regulatory effect on ERK signaling pathway activity in response to EGF stimulation. Colocalizes with the EGF receptor in WDR54-specific vesicle where it sustains the internalization and controls the degradation of the EGF receptor after EGF stimulation. The chain is WD repeat-containing protein 54 from Mus musculus (Mouse).